A 396-amino-acid chain; its full sequence is Elongation factor Tu (396 aa).

The tr-type G domain maps to 10-206 (KPHCNIGTIG…AVDSYIPQPE (197 aa)). Positions 19-26 (GHVDHGKT) are G1. GTP is bound at residue 19-26 (GHVDHGKT). Thr-26 is a binding site for Mg(2+). Residues 60 to 64 (GITIS) form a G2 region. The interval 81–84 (DCPG) is G3. GTP-binding positions include 81–85 (DCPGH) and 136–139 (NKVD). The G4 stretch occupies residues 136–139 (NKVD). The G5 stretch occupies residues 174–176 (SAV).

Belongs to the TRAFAC class translation factor GTPase superfamily. Classic translation factor GTPase family. EF-Tu/EF-1A subfamily. In terms of assembly, monomer.

It localises to the cytoplasm. It catalyses the reaction GTP + H2O = GDP + phosphate + H(+). Its function is as follows. GTP hydrolase that promotes the GTP-dependent binding of aminoacyl-tRNA to the A-site of ribosomes during protein biosynthesis. The protein is Elongation factor Tu of Rhizorhabdus wittichii (strain DSM 6014 / CCUG 31198 / JCM 15750 / NBRC 105917 / EY 4224 / RW1) (Sphingomonas wittichii).